A 272-amino-acid polypeptide reads, in one-letter code: ATP synthase subunit a (272 aa).

The next 6 membrane-spanning stretches (helical) occupy residues 42–62 (IDSL…AGFV), 108–128 (FVWI…LPCI), 140–162 (ILPS…LMIF), 177–197 (LIYH…LEII), 219–239 (LIFI…LSVP), and 241–261 (AIFH…LTII).

It belongs to the ATPase A chain family. As to quaternary structure, F-type ATPases have 2 components, CF(1) - the catalytic core - and CF(0) - the membrane proton channel. CF(1) has five subunits: alpha(3), beta(3), gamma(1), delta(1), epsilon(1). CF(0) has three main subunits: a(1), b(2) and c(9-12). The alpha and beta chains form an alternating ring which encloses part of the gamma chain. CF(1) is attached to CF(0) by a central stalk formed by the gamma and epsilon chains, while a peripheral stalk is formed by the delta and b chains.

The protein resides in the cell inner membrane. Key component of the proton channel; it plays a direct role in the translocation of protons across the membrane. This chain is ATP synthase subunit a, found in Blochmanniella floridana.